The chain runs to 318 residues: Thymidylate synthase (318 aa).

Residues Arg26 and 181 to 182 (RR) each bind dUMP. The Nucleophile role is filled by Cys201. DUMP contacts are provided by residues 221–224 (RSAD), Asn232, and 262–264 (HIY). Position 224 (Asp224) interacts with (6R)-5,10-methylene-5,6,7,8-tetrahydrofolate. Residue Ala317 coordinates (6R)-5,10-methylene-5,6,7,8-tetrahydrofolate.

This sequence belongs to the thymidylate synthase family. Bacterial-type ThyA subfamily. Homodimer.

It is found in the cytoplasm. The catalysed reaction is dUMP + (6R)-5,10-methylene-5,6,7,8-tetrahydrofolate = 7,8-dihydrofolate + dTMP. It functions in the pathway pyrimidine metabolism; dTTP biosynthesis. Its function is as follows. Catalyzes the reductive methylation of 2'-deoxyuridine-5'-monophosphate (dUMP) to 2'-deoxythymidine-5'-monophosphate (dTMP) while utilizing 5,10-methylenetetrahydrofolate (mTHF) as the methyl donor and reductant in the reaction, yielding dihydrofolate (DHF) as a by-product. This enzymatic reaction provides an intracellular de novo source of dTMP, an essential precursor for DNA biosynthesis. In Staphylococcus haemolyticus (strain JCSC1435), this protein is Thymidylate synthase.